Reading from the N-terminus, the 68-residue chain is Negative regulatory protein YxlD (68 aa).

2 consecutive transmembrane segments (helical) span residues 5-25 (EIIITVAACLIVLAQGIFLFI) and 37-57 (WGIVGLIQAPMPLICYYFFVI).

It is found in the cell membrane. In terms of biological role, together with YxlE, is important for negative regulation of sigma Y activity, being the major negative regulator. In Bacillus subtilis (strain 168), this protein is Negative regulatory protein YxlD (yxlD).